The sequence spans 1049 residues: Presequence protease, mitochondrial (1049 aa).

The N-terminal 39 residues, 1-39 (MLRSYLHLGRHRTPAFRQPLGRLLRPTASILQYAQSRTL), are a transit peptide targeting the mitochondrion. H113 provides a ligand contact to Zn(2+). The active-site Proton acceptor is E116. Residue H117 participates in Zn(2+) binding. Residue E189 is part of the active site. Zn(2+) is bound at residue E222.

The protein belongs to the peptidase M16 family. PreP subfamily. In terms of assembly, monomer and homodimer; homodimerization is induced by binding of the substrate. Zn(2+) serves as cofactor.

The protein resides in the mitochondrion intermembrane space. The protein localises to the mitochondrion matrix. Degrades mitochondrial transit peptides after their cleavage in the intermembrane space or in the matrix, and presequence peptides; clearance of these peptides is required to keep the presequence processing machinery running. Preferentially cleaves the N-terminal side of paired basic amino acid residues. Also degrades other unstructured peptides. May function as an ATP-dependent peptidase as opposed to a metalloendopeptidase. The polypeptide is Presequence protease, mitochondrial (cym1) (Emericella nidulans (strain FGSC A4 / ATCC 38163 / CBS 112.46 / NRRL 194 / M139) (Aspergillus nidulans)).